The sequence spans 221 residues: Large ribosomal subunit protein uL16x (221 aa).

This sequence belongs to the universal ribosomal protein uL16 family. As to quaternary structure, component of the small ribosomal subunit. Mature ribosomes consist of a small (40S) and a large (60S) subunit. The 40S subunit contains about 33 different proteins and 1 molecule of RNA (18S). The 60S subunit contains about 49 different proteins and 3 molecules of RNA (25S, 5.8S and 5S).

This is Large ribosomal subunit protein uL16x (RPL10C) from Arabidopsis thaliana (Mouse-ear cress).